The following is a 517-amino-acid chain: Glutamate--tRNA ligase (517 aa).

The 'HIGH' region motif lies at 14-24; the sequence is PSPTGPLHIGG. The 'KMSKS' region motif lies at 266–270; it reads KLSKR. Lysine 269 lines the ATP pocket.

The protein belongs to the class-I aminoacyl-tRNA synthetase family. Glutamate--tRNA ligase type 1 subfamily. As to quaternary structure, monomer.

It localises to the cytoplasm. It carries out the reaction tRNA(Glu) + L-glutamate + ATP = L-glutamyl-tRNA(Glu) + AMP + diphosphate. Its function is as follows. Catalyzes the attachment of glutamate to tRNA(Glu) in a two-step reaction: glutamate is first activated by ATP to form Glu-AMP and then transferred to the acceptor end of tRNA(Glu). This is Glutamate--tRNA ligase from Cytophaga hutchinsonii (strain ATCC 33406 / DSM 1761 / CIP 103989 / NBRC 15051 / NCIMB 9469 / D465).